The following is a 145-amino-acid chain: MTIDITEIMDLIPHRYPFLLVDKVVEIDPNKSITGIKNVTVNEPQFTGHFPARPVMPGVLMVEAMAQLAAILVAKSLGSTKNKEVFLMAIENSKFRKVVQPGDTMHIHATIDQQRANVWKFSSTVKVDGEMAAESKFTAMIKDKS.

Residue histidine 49 is part of the active site.

Belongs to the thioester dehydratase family. FabZ subfamily.

The protein localises to the cytoplasm. It catalyses the reaction a (3R)-hydroxyacyl-[ACP] = a (2E)-enoyl-[ACP] + H2O. Functionally, involved in unsaturated fatty acids biosynthesis. Catalyzes the dehydration of short chain beta-hydroxyacyl-ACPs and long chain saturated and unsaturated beta-hydroxyacyl-ACPs. The protein is 3-hydroxyacyl-[acyl-carrier-protein] dehydratase FabZ of Rickettsia bellii (strain RML369-C).